Here is a 167-residue protein sequence, read N- to C-terminus: MVMAKVDPNEGLQEKLVQVNRVAKVVKGGRIFGFTALTVVGDGKGKVGFGRGKAREVPAAIQKALEAARRNMIQVELNGTTIQHPMKARHGASKVYMQPADEGTGVIAGGAMRAVLEVAGVQNVLAKCYGSTNPVNVVRATFNGLKSMASPESVAAKRGKSVDEILN.

The S5 DRBM domain occupies 12-75 (LQEKLVQVNR…EAARRNMIQV (64 aa)).

The protein belongs to the universal ribosomal protein uS5 family. In terms of assembly, part of the 30S ribosomal subunit. Contacts proteins S4 and S8.

In terms of biological role, with S4 and S12 plays an important role in translational accuracy. Functionally, located at the back of the 30S subunit body where it stabilizes the conformation of the head with respect to the body. The protein is Small ribosomal subunit protein uS5 of Alcanivorax borkumensis (strain ATCC 700651 / DSM 11573 / NCIMB 13689 / SK2).